We begin with the raw amino-acid sequence, 191 residues long: Sporulation-specific protein (191 aa).

Its function is as follows. Not essential for sporulation. This is Sporulation-specific protein (SPR6) from Saccharomyces cerevisiae (strain ATCC 204508 / S288c) (Baker's yeast).